Consider the following 756-residue polypeptide: MNMARNVTDLLALSQQEELVDLPENYPLSTSEDEGDSDGEGKRQKLLEAVSSLGRKNKWKLAERSEASRMVSEFNVTSEGSGEKLVLSDLLGSATALSSVAAVKKQLHRVKSKTLTPPLNKEEADRALREAAFSKTSQMLSRWDPVVLKNRQAEQLIFPMEKEPPAVAPIEHVFTDWKVRTPLEQEVFNLLHKNKQPVTDPLLTPVETASIRAMSLEEAKIRRAELQRMRALQSYYEARARREKRIKSKKYHRALKKGKAKKALKEFEELWKDCPNAALQELEKMEKARMTERMSLKHQGSGKWAKSKAIMAKYDPEARKAMQEQLAKNRELTQKLQVVSESEEEDGCTEEGIVSVSHGMDDLQMNADGVNPWMLSSCNSNAKRGEIKTDPEQMPEFVAHVSSESEGDERPVAEELVLKERSFQERVDPNNAKLMDGQETEDSDSQEVLQKLNKESHQSDNQKVSSEENVLHIQREDLASEKLLVLQRLERAHVLEQQGELSKEEHYPKKGLSRPLLKGDWKEMKPLTNPDASGGKKKKEQMIDLRNLLTANSSPVRSLAVPTIQQLEDEVETDHKQLIREAFAGDDVIREFLKEKREAIETNKPKDLDLSLPGWGEWVGMGLKPSAKKRRRFLIKAPESSPRKDKNLPNVIISEKRNIHAAAHQVRALPHPFTHQQQFERTIQNPIGYMWNTQRTFQKLTVPKVGTKLGHIIKPIKAENVGYCSSTRSDLSILQSSQKCLSRKQQKQLKKLSSAD.

Residues 21-44 (DLPENYPLSTSEDEGDSDGEGKRQ) are disordered. Residues Ser-29, Ser-31, and Ser-37 each carry the phosphoserine modification. 2 coiled-coil regions span residues 215 to 244 (SLEE…RREK) and 316 to 345 (PEAR…SEEE). Basic and acidic residues-rich tracts occupy residues 419 to 428 (KERSFQERVD) and 452 to 468 (LNKE…SSEE). Disordered regions lie at residues 419–468 (KERS…SSEE) and 497–539 (QQGE…KKKK). The stretch at 449–476 (LQKLNKESHQSDNQKVSSEENVLHIQRE) forms a coiled coil. Ser-554 bears the Phosphoserine mark.

Belongs to the UTP14 family. Expressed predominantly in germ cells of the testis; weakly expressed in brain.

It is found in the nucleus. It localises to the nucleolus. Its function is as follows. Essential for spermatogenesis. May be required specifically for ribosome biogenesis and hence protein synthesis during male meiosis. The polypeptide is U3 small nucleolar RNA-associated protein 14 homolog B (Utp14b) (Mus musculus (Mouse)).